A 270-amino-acid polypeptide reads, in one-letter code: Homeobox protein pal-1 (270 aa).

Disordered stretches follow at residues 1–24 (MSVDVKSDFSENESSSTPSPTTVP), 96–130 (VKPPLSNGSSSSDSGMYPSPSDMMTPFPSTSSGAA), and 175–201 (LGNNHGKDRRSSSDGKTLPTGPGTNNV). Composition is skewed to low complexity over residues 14–24 (SSSTPSPTTVP) and 101–130 (SNGSSSSDSGMYPSPSDMMTPFPSTSSGAA). A DNA-binding region (homeobox) is located at residues 206–265 (ADKYRMVYSDYQRLELEKEFHTSPFITSDRKSQLSTMLSLTERQIKIWFQNRRAKDRRDK).

This sequence belongs to the Caudal homeobox family. In terms of assembly, interacts with tir-1 and let-756. In terms of tissue distribution, blastomeres. Embryo. Oocytes.

It localises to the nucleus. It is found in the chromosome. Its subcellular location is the centromere. The protein resides in the kinetochore. Functionally, transcriptional activator. Interacts with promoter regions for tbx-8.9, tbx-9, elt-1, hnd-1, scrt-1, and vab-7 genes. Binds the sequence ATTTATGAC. Binds to the enhancer region of the hlh-1 gene promoter during embryonic body wall muscle development. Activates the gene for mab-5 in embryo development. Necessary for vab-7 expression in C blastomeres in the posterior of embryos. Required for posterior V6 neuroectoblast cell fate specification during postembryonic neurogenesis (patterning) which generates the characteristic ray lineage during male tail development. Binds to ced-3 promoter and activated expression which is crucial for tail-spike cell death. Has a role in E cell specification in endoderm development and body wall muscle development. This Caenorhabditis elegans protein is Homeobox protein pal-1 (pal-1).